A 289-amino-acid chain; its full sequence is Arabinogalactan O-methyltransferase 1 (289 aa).

Residues 12-32 (IITGVLLAGLVGGALLFTSFI) form a helical membrane-spanning segment.

Belongs to the methyltransferase superfamily. Binds to the translation initiation factors TIF3E1.

The protein resides in the golgi apparatus membrane. In terms of biological role, involved in the methylation of glucuronic acid of different plant cell wall component, but mainly on side chains of arabinogalactans. The polypeptide is Arabinogalactan O-methyltransferase 1 (AGM1) (Arabidopsis thaliana (Mouse-ear cress)).